The chain runs to 421 residues: MSKLTIVRGFNDVLPLDSYKWQLLESKVKLILDRYNYSETRLPIVERSELFHRSVGESSDIVSKETYDFQDRNGDSLTLRPEGTAGCVRMVIENNLATRGQTQKLWYCGPMFRYERPQKGRYRQFYQLGVEAYGFDGIAIDLEVIAIAWSLFKELGISEYVTLELNSLGSSLNRQEYTQALLQYLKPYHAELDEDSIKRLDKNPLRILDSKIEKTQKILANAPKLIDFIDHDLRLRFKQTCQYLDALGVRYKLNENLVRGLDYYTGLVFEWTTDKLGSQSAICAGGRYDGLVENLGGQKTAAIGFAIGMERLLLLLEDLGKLPNQDNACDVFFILDSAQLHQSLAIVENIRQELPQLKIDMDLKFGSFKSQFKKADKSGAKVAIIIGQDELDNGFAGIKFLQQNEEQQQVAFNELINFLER.

This sequence belongs to the class-II aminoacyl-tRNA synthetase family. Homodimer.

The protein resides in the cytoplasm. The enzyme catalyses tRNA(His) + L-histidine + ATP = L-histidyl-tRNA(His) + AMP + diphosphate + H(+). The polypeptide is Histidine--tRNA ligase (Francisella tularensis subsp. mediasiatica (strain FSC147)).